Reading from the N-terminus, the 320-residue chain is Lipoyl synthase (320 aa).

Residues 1–24 (MIGKLVRDLKIPDQRHPEKAHRPD) show a composition bias toward basic and acidic residues. Residues 1-30 (MIGKLVRDLKIPDQRHPEKAHRPDNVQPKK) are disordered. Residues Cys-60, Cys-65, Cys-71, Cys-86, Cys-90, Cys-93, and Ser-300 each contribute to the [4Fe-4S] cluster site. The Radical SAM core domain occupies 72–289 (WSQGHATMMI…EKAAYGKGFL (218 aa)).

The protein belongs to the radical SAM superfamily. Lipoyl synthase family. It depends on [4Fe-4S] cluster as a cofactor.

It localises to the cytoplasm. It carries out the reaction [[Fe-S] cluster scaffold protein carrying a second [4Fe-4S](2+) cluster] + N(6)-octanoyl-L-lysyl-[protein] + 2 oxidized [2Fe-2S]-[ferredoxin] + 2 S-adenosyl-L-methionine + 4 H(+) = [[Fe-S] cluster scaffold protein] + N(6)-[(R)-dihydrolipoyl]-L-lysyl-[protein] + 4 Fe(3+) + 2 hydrogen sulfide + 2 5'-deoxyadenosine + 2 L-methionine + 2 reduced [2Fe-2S]-[ferredoxin]. It functions in the pathway protein modification; protein lipoylation via endogenous pathway; protein N(6)-(lipoyl)lysine from octanoyl-[acyl-carrier-protein]: step 2/2. Functionally, catalyzes the radical-mediated insertion of two sulfur atoms into the C-6 and C-8 positions of the octanoyl moiety bound to the lipoyl domains of lipoate-dependent enzymes, thereby converting the octanoylated domains into lipoylated derivatives. This Cereibacter sphaeroides (strain ATCC 17029 / ATH 2.4.9) (Rhodobacter sphaeroides) protein is Lipoyl synthase.